Consider the following 288-residue polypeptide: Anthranilate synthase beta subunit 1, chloroplastic (288 aa).

The N-terminal 58 residues, 1-58 (MACSHLAAAAAAASPAAARSPAASSAATASAFARLSATPRVASGGLAVRGQRGVAAVV), are a transit peptide targeting the chloroplast. Positions 83–282 (PIIVIDNYDS…VRFIEELEKQ (200 aa)) constitute a Glutamine amidotransferase type-1 domain. 134–136 (GPG) is a binding site for L-glutamine. Cys-161 (nucleophile) is an active-site residue. L-glutamine-binding positions include Gln-165 and 215–216 (SL). Residues His-256 and Glu-258 contribute to the active site.

Heterotetramer consisting of two non-identical subunits: a beta subunit and a large alpha subunit. In terms of tissue distribution, expressed in roots and leaves.

The protein localises to the plastid. It localises to the chloroplast. The catalysed reaction is chorismate + L-glutamine = anthranilate + pyruvate + L-glutamate + H(+). The protein operates within amino-acid biosynthesis; L-tryptophan biosynthesis; L-tryptophan from chorismate: step 1/5. Part of a heterotetrameric complex that catalyzes the two-step biosynthesis of anthranilate, an intermediate in the biosynthesis of L-tryptophan. In the first step, the glutamine-binding beta subunit of anthranilate synthase (AS) provides the glutamine amidotransferase activity which generates ammonia as a substrate that, along with chorismate, is used in the second step, catalyzed by the large alpha subunit of AS to produce anthranilate. The protein is Anthranilate synthase beta subunit 1, chloroplastic of Oryza sativa subsp. japonica (Rice).